A 96-amino-acid polypeptide reads, in one-letter code: Co-chaperonin GroES (96 aa).

It belongs to the GroES chaperonin family. As to quaternary structure, heptamer of 7 subunits arranged in a ring. Interacts with the chaperonin GroEL.

It localises to the cytoplasm. Together with the chaperonin GroEL, plays an essential role in assisting protein folding. The GroEL-GroES system forms a nano-cage that allows encapsulation of the non-native substrate proteins and provides a physical environment optimized to promote and accelerate protein folding. GroES binds to the apical surface of the GroEL ring, thereby capping the opening of the GroEL channel. In Polynucleobacter asymbioticus (strain DSM 18221 / CIP 109841 / QLW-P1DMWA-1) (Polynucleobacter necessarius subsp. asymbioticus), this protein is Co-chaperonin GroES.